The sequence spans 546 residues: MFS-type transporter patC (546 aa).

Residues 1 to 15 (MSIDASPSESVLESQ) are compositionally biased toward polar residues. The segment at 1–29 (MSIDASPSESVLESQTPDRVDESIPIKAE) is disordered. Residues 16–29 (TPDRVDESIPIKAE) are compositionally biased toward basic and acidic residues. A run of 14 helical transmembrane segments spans residues 41 to 61 (IVGF…LLYG), 89 to 109 (VGFT…YAIF), 113 to 133 (WLFL…GAAP), 143 to 163 (VWAG…ITIL), 171 to 191 (VYVG…PIIG), 203 to 223 (WSFY…VFLL), 245 to 265 (WVGT…IVFG), 277 to 297 (IALY…QYFC), 318 to 338 (LLLY…VYYI), 350 to 370 (GIMS…TILL), 379 to 399 (GYFI…AVLM), 416 to 436 (ILMG…PAIV), 447 to 467 (FMNI…SAIF), and 515 to 535 (VIVS…ALYV).

This sequence belongs to the major facilitator superfamily. TCR/Tet family.

Its subcellular location is the vacuole membrane. The protein resides in the cell membrane. Functionally, MFS-type transporter; part of the gene cluster that mediates the biosynthesis of patulin, an acetate-derived tetraketide mycotoxin produced by several fungal species that shows antimicrobial properties against several bacteria. May be involved in the secretion of E-ascladiol to be converted to patulin by the secreted patulin synthase patE. The sequence is that of MFS-type transporter patC from Penicillium expansum (Blue mold rot fungus).